Consider the following 160-residue polypeptide: Nucleotide-binding protein CbuK_1936 (160 aa).

It belongs to the YajQ family.

Functionally, nucleotide-binding protein. This is Nucleotide-binding protein CbuK_1936 from Coxiella burnetii (strain CbuK_Q154) (Coxiella burnetii (strain Q154)).